The primary structure comprises 236 residues: UPF0173 metal-dependent hydrolase AZC_2841 (236 aa).

The protein belongs to the UPF0173 family.

The polypeptide is UPF0173 metal-dependent hydrolase AZC_2841 (Azorhizobium caulinodans (strain ATCC 43989 / DSM 5975 / JCM 20966 / LMG 6465 / NBRC 14845 / NCIMB 13405 / ORS 571)).